The primary structure comprises 346 residues: Cyclin-dependent kinase 20 (346 aa).

The 285-residue stretch at 4–288 (YCILGRIGEG…ASQALLHQYF (285 aa)) folds into the Protein kinase domain. ATP is bound by residues 10 to 18 (IGEGAHGIV) and lysine 33. The active-site Proton acceptor is the aspartate 127. The disordered stretch occupies residues 298-324 (SELPIPQRPGGPTPKAHPGPPHVHDFH). Over residues 303 to 318 (PQRPGGPTPKAHPGPP) the composition is skewed to pro residues.

Belongs to the protein kinase superfamily. CMGC Ser/Thr protein kinase family. CDC2/CDKX subfamily. In terms of assembly, monomer. Interacts with TBC1D32 and MAK.

The protein resides in the nucleus. It localises to the cytoplasm. The protein localises to the cell projection. Its subcellular location is the cilium. It carries out the reaction L-seryl-[protein] + ATP = O-phospho-L-seryl-[protein] + ADP + H(+). The enzyme catalyses L-threonyl-[protein] + ATP = O-phospho-L-threonyl-[protein] + ADP + H(+). In terms of biological role, required for high-level Shh responses in the developing neural tube. Together with TBC1D32, controls the structure of the primary cilium by coordinating assembly of the ciliary membrane and axoneme, allowing GLI2 to be properly activated in response to SHH signaling. Involved in cell growth. Activates CDK2, a kinase involved in the control of the cell cycle, by phosphorylating residue 'Thr-160'. This is Cyclin-dependent kinase 20 (Cdk20) from Rattus norvegicus (Rat).